Consider the following 243-residue polypeptide: Purine nucleoside phosphorylase YfiH (243 aa).

Residues His71, Cys107, and His124 each coordinate Zn(2+).

The protein belongs to the purine nucleoside phosphorylase YfiH/LACC1 family. Homodimer. It depends on Cu(2+) as a cofactor. Requires Zn(2+) as cofactor.

The catalysed reaction is adenosine + phosphate = alpha-D-ribose 1-phosphate + adenine. It carries out the reaction S-methyl-5'-thioadenosine + phosphate = 5-(methylsulfanyl)-alpha-D-ribose 1-phosphate + adenine. It catalyses the reaction inosine + phosphate = alpha-D-ribose 1-phosphate + hypoxanthine. The enzyme catalyses adenosine + H2O + H(+) = inosine + NH4(+). Functionally, purine nucleoside enzyme that catalyzes the phosphorolysis of adenosine and inosine nucleosides, yielding D-ribose 1-phosphate and the respective free bases, adenine and hypoxanthine. Also catalyzes the phosphorolysis of S-methyl-5'-thioadenosine into adenine and S-methyl-5-thio-alpha-D-ribose 1-phosphate. Also has adenosine deaminase activity. May also act as a polyphenol oxidase: able to oxidize syringaldazine and 2,2'-azino-bis(3-ethylbenzthiazoline-6-sulfonic acid) (ABTS) in vitro. This chain is Purine nucleoside phosphorylase YfiH, found in Escherichia coli (strain K12).